Reading from the N-terminus, the 324-residue chain is Polyphosphate glucokinase (324 aa).

Residues 53–79 (TSTDATADTPRTSPPSDTAGTTSRHRG) are disordered. The segment covering 62–74 (PRTSPPSDTAGTT) has biased composition (polar residues). 83 to 88 (DIGGSS) lines the ATP pocket.

Belongs to the ROK (NagC/XylR) family. Homodimer.

The catalysed reaction is [phosphate](n) + D-glucose = [phosphate](n-1) + D-glucose 6-phosphate + H(+). It catalyses the reaction D-glucose + ATP = D-glucose 6-phosphate + ADP + H(+). Its function is as follows. Catalyzes the phosphorylation of glucose using polyphosphate or ATP as the phosphoryl donor. This Mycobacterium leprae (strain TN) protein is Polyphosphate glucokinase (ppgK).